Here is a 298-residue protein sequence, read N- to C-terminus: GTPase Era (298 aa).

One can recognise an Era-type G domain in the interval 3 to 170 (KSGFVAILGR…IKLLTDNLEE (168 aa)). The G1 stretch occupies residues 11–18 (GRPNVGKS). 11-18 (GRPNVGKS) is a GTP binding site. The segment at 37 to 41 (QTTRN) is G2. The segment at 58–61 (DTPG) is G3. GTP-binding positions include 58 to 62 (DTPGI) and 120 to 123 (NKID). The tract at residues 120–123 (NKID) is G4. Positions 149 to 151 (ISA) are G5. Positions 201–279 (TQQEVPHSVA…YLETWVKVKK (79 aa)) constitute a KH type-2 domain.

Belongs to the TRAFAC class TrmE-Era-EngA-EngB-Septin-like GTPase superfamily. Era GTPase family. Monomer.

The protein localises to the cytoplasm. The protein resides in the cell membrane. Functionally, an essential GTPase that binds both GDP and GTP, with rapid nucleotide exchange. Plays a role in 16S rRNA processing and 30S ribosomal subunit biogenesis and possibly also in cell cycle regulation and energy metabolism. In Streptococcus pyogenes serotype M4 (strain MGAS10750), this protein is GTPase Era.